An 83-amino-acid chain; its full sequence is Protein midgut expression 1 (83 aa).

As to expression, endoderm-specific pattern of expression during embryogenesis; anterior and posterior midgut primordia.

In terms of biological role, involved in morphogenesis and development. The polypeptide is Protein midgut expression 1 (mex1) (Drosophila melanogaster (Fruit fly)).